Consider the following 302-residue polypeptide: Meiotic recombination protein rec14 (302 aa).

7 WD repeats span residues 14 to 51, 57 to 96, 101 to 140, 142 to 184, 185 to 226, 227 to 266, and 269 to 302; these read AHQADIYSLNVVAGNLWSASGDSKIKKWSIGDAEHSLV, PHKLGVHHLATSLDENVVVSCGFGQDVYVWNPETNEFRDL, QHPSECWSSCISPDGQTIAFTSVDGRIAVWDNPSDCKISE, DTKG…HVLS, GHTS…GQLR, GHAAWIFAVAFNPVGDLLLSADVEGKIKIWDIDTMECIST, and ETDGAIWAVAWYKNGFIVAGADKSIRWYRAAATE.

As to quaternary structure, component of the DSB catalytic core (DSBC) complex, composed of at least rec12, rec6 and rec14. The complex interacts with mde2.

Functionally, required for formation of the rec12-mediated double-strand breaks (DSBs) that initiate meiotic recombination. In Schizosaccharomyces pombe (strain 972 / ATCC 24843) (Fission yeast), this protein is Meiotic recombination protein rec14.